Consider the following 529-residue polypeptide: tRNA-2-methylthio-N(6)-dimethylallyladenosine synthase (529 aa).

In terms of domain architecture, MTTase N-terminal spans 18–134; that stretch reads RTYQVRTYGC…LPTLLERARH (117 aa). Cys27, Cys63, Cys97, Cys171, Cys175, and Cys178 together coordinate [4Fe-4S] cluster. Residues 157–404 form the Radical SAM core domain; sequence RESAYAGWVS…IELQERISLE (248 aa). The TRAM domain maps to 407–486; it reads QAQVGRTLEL…PHHLIADGAL (80 aa).

Belongs to the methylthiotransferase family. MiaB subfamily. As to quaternary structure, monomer. [4Fe-4S] cluster is required as a cofactor.

It localises to the cytoplasm. It carries out the reaction N(6)-dimethylallyladenosine(37) in tRNA + (sulfur carrier)-SH + AH2 + 2 S-adenosyl-L-methionine = 2-methylsulfanyl-N(6)-dimethylallyladenosine(37) in tRNA + (sulfur carrier)-H + 5'-deoxyadenosine + L-methionine + A + S-adenosyl-L-homocysteine + 2 H(+). Functionally, catalyzes the methylthiolation of N6-(dimethylallyl)adenosine (i(6)A), leading to the formation of 2-methylthio-N6-(dimethylallyl)adenosine (ms(2)i(6)A) at position 37 in tRNAs that read codons beginning with uridine. In Mycobacterium sp. (strain KMS), this protein is tRNA-2-methylthio-N(6)-dimethylallyladenosine synthase.